The sequence spans 317 residues: tRNA dimethylallyltransferase (317 aa).

ATP is bound at residue 13 to 20 (GPTASGKS). Substrate is bound at residue 15–20 (TASGKS).

The protein belongs to the IPP transferase family. In terms of assembly, monomer. Mg(2+) is required as a cofactor.

It carries out the reaction adenosine(37) in tRNA + dimethylallyl diphosphate = N(6)-dimethylallyladenosine(37) in tRNA + diphosphate. Its function is as follows. Catalyzes the transfer of a dimethylallyl group onto the adenine at position 37 in tRNAs that read codons beginning with uridine, leading to the formation of N6-(dimethylallyl)adenosine (i(6)A). This chain is tRNA dimethylallyltransferase, found in Kineococcus radiotolerans (strain ATCC BAA-149 / DSM 14245 / SRS30216).